The sequence spans 471 residues: Glutamate--tRNA ligase (471 aa).

The 'HIGH' region motif lies at Pro-9 to Gly-19. Zn(2+) contacts are provided by Cys-98, Cys-100, Cys-125, and His-127. Positions Lys-237–Arg-241 match the 'KMSKS' region motif. Lys-240 contacts ATP.

This sequence belongs to the class-I aminoacyl-tRNA synthetase family. Glutamate--tRNA ligase type 1 subfamily. In terms of assembly, monomer. Zn(2+) is required as a cofactor.

The protein resides in the cytoplasm. The catalysed reaction is tRNA(Glu) + L-glutamate + ATP = L-glutamyl-tRNA(Glu) + AMP + diphosphate. Functionally, catalyzes the attachment of glutamate to tRNA(Glu) in a two-step reaction: glutamate is first activated by ATP to form Glu-AMP and then transferred to the acceptor end of tRNA(Glu). This is Glutamate--tRNA ligase from Salmonella paratyphi A (strain ATCC 9150 / SARB42).